The chain runs to 1439 residues: Histone-lysine N-methyltransferase NSD3 (1439 aa).

The segment at 121–151 (PHEILEKPSPPQPPPPPSVPQTVIPKKTGSP) is disordered. A compositionally biased stretch (pro residues) spans 128 to 139 (PSPPQPPPPPSV). S150 is subject to Phosphoserine. Positions 154 to 157 (KLKI) match the KIKL motif. A disordered region spans residues 181 to 247 (QASEHTKSKH…PREEPVLKEA (67 aa)). The segment covering 187–201 (KSKHESRKEKRKKSN) has biased composition (basic residues). Residues 202–244 (RHESSRSEERRSHKIPKLEPEGQNRPNERVDTAPEKPREEPVL) show a composition bias toward basic and acidic residues. Residues K218 and K245 each participate in a glycyl lysine isopeptide (Lys-Gly) (interchain with G-Cter in SUMO2) cross-link. In terms of domain architecture, PWWP 1 spans 270–333 (VGDLVWSKVG…EKRVREYKGH (64 aa)). 2 disordered regions span residues 344-367 (AKQASNHSEKQKIRKPRPQRERAQ) and 401-466 (EASS…PPPV). Composition is skewed to polar residues over residues 401 to 413 (EASSQAKKNVTSK) and 425 to 445 (VLNSQPEQTNAGEVASSQSST). K413 is covalently cross-linked (Glycyl lysine isopeptide (Lys-Gly) (interchain with G-Cter in SUMO2)). Residue S457 is modified to Phosphoserine. Residues K502 and K532 each participate in a glycyl lysine isopeptide (Lys-Gly) (interchain with G-Cter in SUMO2) cross-link. Positions 540–695 (QDRLIISSPS…VDSSLSRRGV (156 aa)) are disordered. The segment covering 546–568 (SSPSQRSEKPAQSASSPEATSGS) has biased composition (polar residues). The span at 583 to 595 (TRSESEKSAEVVP) shows a compositional bias: basic and acidic residues. 3 positions are modified to phosphoserine: S585, S587, and S590. A Glycyl lysine isopeptide (Lys-Gly) (interchain with G-Cter in SUMO2) cross-link involves residue K628. Polar residues predominate over residues 637–648 (STDVETASCTYR). Residue S655 is modified to Phosphoserine. Over residues 670–691 (DSPSATADADASDAQSVDSSLS) the composition is skewed to low complexity. 3 PHD-type zinc fingers span residues 701 to 748 (DTVC…CETG), 749 to 805 (QHPC…CSME), and 862 to 955 (VGFC…CKAG). K790 bears the N6-acetyllysine mark. The PWWP 2 domain occupies 960–1025 (YKQIVWVKLG…QGRVFPYVEG (66 aa)). A coiled-coil region spans residues 1036 to 1065 (INKTFKKALEEAAKRFQELKAQRESKEALE). In terms of domain architecture, AWS spans 1096–1146 (SEIPRCNCKPGDENPCGLESQCLNRMSQYECHPQVCPAGDRCQNQCFTKRL). Positions 1148–1265 (PDAEVIKTER…AGMELTFNYN (118 aa)) constitute an SET domain. A Glycyl lysine isopeptide (Lys-Gly) (interchain with G-Cter in SUMO2) cross-link involves residue K1154. A Post-SET domain is found at 1272 to 1288 (GRTVCHCGADNCSGFLG). The segment at 1323 to 1370 (EDYCFQCGDGGELVMCDKKDCPKAYHLLCLNLTQPPHGKWECPWHRCD) adopts a PHD-type 4; atypical zinc-finger fold.

This sequence belongs to the class V-like SAM-binding methyltransferase superfamily. Histone-lysine methyltransferase family. SET2 subfamily. In terms of assembly, interacts with BRD4. Interacts (via KIKL motif) with BRD3 (via NET domain).

The protein resides in the nucleus. Its subcellular location is the chromosome. It carries out the reaction L-lysyl(4)-[histone H3] + 2 S-adenosyl-L-methionine = N(6),N(6)-dimethyl-L-lysyl(4)-[histone H3] + 2 S-adenosyl-L-homocysteine + 2 H(+). The catalysed reaction is L-lysyl(27)-[histone H3] + 2 S-adenosyl-L-methionine = N(6),N(6)-dimethyl-L-lysyl(27)-[histone H3] + 2 S-adenosyl-L-homocysteine + 2 H(+). In terms of biological role, histone methyltransferase. Preferentially dimethylates 'Lys-4' and 'Lys-27' of histone H3 forming H3K4me2 and H3K27me2. H3 'Lys-4' methylation represents a specific tag for epigenetic transcriptional activation, while 'Lys-27' is a mark for transcriptional repression. The protein is Histone-lysine N-methyltransferase NSD3 (Nsd3) of Mus musculus (Mouse).